The following is a 228-amino-acid chain: 3-dehydroquinate dehydratase (228 aa).

Residues Ser26, 51–53 (EIR), and Arg84 contribute to the 3-dehydroquinate site. His127 acts as the Proton donor/acceptor in catalysis. Residue Lys150 is the Schiff-base intermediate with substrate of the active site. Positions 190, 209, and 213 each coordinate 3-dehydroquinate.

This sequence belongs to the type-I 3-dehydroquinase family. Homodimer.

It catalyses the reaction 3-dehydroquinate = 3-dehydroshikimate + H2O. It functions in the pathway metabolic intermediate biosynthesis; chorismate biosynthesis; chorismate from D-erythrose 4-phosphate and phosphoenolpyruvate: step 3/7. Its function is as follows. Involved in the third step of the chorismate pathway, which leads to the biosynthesis of aromatic amino acids. Catalyzes the cis-dehydration of 3-dehydroquinate (DHQ) and introduces the first double bond of the aromatic ring to yield 3-dehydroshikimate. The polypeptide is 3-dehydroquinate dehydratase (Thermoplasma acidophilum (strain ATCC 25905 / DSM 1728 / JCM 9062 / NBRC 15155 / AMRC-C165)).